The sequence spans 450 residues: Tubulin alpha-1 chain (450 aa).

7 residues coordinate GTP: Gln-11, Glu-71, Gly-144, Thr-145, Thr-179, Asn-206, and Asn-228. Glu-71 provides a ligand contact to Mg(2+). Glu-254 is a catalytic residue. Residue Thr-349 is modified to Phosphothreonine. The tract at residues 431-450 is disordered; sequence DYEEVGGEGAEDDDEEGDEY.

Belongs to the tubulin family. Dimer of alpha and beta chains. A typical microtubule is a hollow water-filled tube with an outer diameter of 25 nm and an inner diameter of 15 nM. Alpha-beta heterodimers associate head-to-tail to form protofilaments running lengthwise along the microtubule wall with the beta-tubulin subunit facing the microtubule plus end conferring a structural polarity. Microtubules usually have 13 protofilaments but different protofilament numbers can be found in some organisms and specialized cells. It depends on Mg(2+) as a cofactor. Post-translationally, undergoes a tyrosination/detyrosination cycle, the cyclic removal and re-addition of a C-terminal tyrosine residue by the enzymes tubulin tyrosine carboxypeptidase (TTCP) and tubulin tyrosine ligase (TTL), respectively.

The protein localises to the cytoplasm. It localises to the cytoskeleton. It catalyses the reaction GTP + H2O = GDP + phosphate + H(+). Its function is as follows. Tubulin is the major constituent of microtubules, a cylinder consisting of laterally associated linear protofilaments composed of alpha- and beta-tubulin heterodimers. Microtubules grow by the addition of GTP-tubulin dimers to the microtubule end, where a stabilizing cap forms. Below the cap, tubulin dimers are in GDP-bound state, owing to GTPase activity of alpha-tubulin. The protein is Tubulin alpha-1 chain (TUBA1) of Arabidopsis thaliana (Mouse-ear cress).